A 274-amino-acid polypeptide reads, in one-letter code: Mitochondrial outer membrane protein porin 3 (274 aa).

S76 bears the Phosphoserine mark.

It belongs to the eukaryotic mitochondrial porin (TC 1.B.8.1) family. As to quaternary structure, interacts with KIN14F/KP1. Interacts with FBA6 and GAPC1. Expressed in leaf tips, anthers and stigma.

The protein localises to the cell membrane. It is found in the mitochondrion outer membrane. Functionally, forms a channel through the mitochondrial outer membrane that allows diffusion of small hydrophilic molecules. The channel adopts an open conformation at low or zero membrane potential and a closed conformation at potentials above 30-40 mV. The open state has a weak anion selectivity whereas the closed state is cation-selective. The protein is Mitochondrial outer membrane protein porin 3 (VDAC3) of Arabidopsis thaliana (Mouse-ear cress).